The sequence spans 799 residues: Ribonucleoside-diphosphate reductase large subunit (799 aa).

Substrate is bound by residues Thr-192, 207-208 (SC), Gly-238, 408-412 (NLCAE), and 612-616 (PTAGT). Residues Cys-208 and Cys-424 are joined by a disulfide bond. The active-site Proton acceptor is the Asn-408. The Cysteine radical intermediate role is filled by Cys-410. The active-site Proton acceptor is Glu-412. The tract at residues 765–799 (PDSGDGVGGYKGGDEEPRSPEHAQCESPDRCLSCQ) is disordered. The span at 776–793 (GGDEEPRSPEHAQCESPD) shows a compositional bias: basic and acidic residues.

Belongs to the ribonucleoside diphosphate reductase large chain family. In terms of assembly, heterotetramer composed of a homodimer of the large subunit (R1) and a homodimer of the small subunit (R2). Larger multisubunit protein complex are also active, composed of (R1)n(R2)n.

It carries out the reaction a 2'-deoxyribonucleoside 5'-diphosphate + [thioredoxin]-disulfide + H2O = a ribonucleoside 5'-diphosphate + [thioredoxin]-dithiol. Functionally, ribonucleoside-diphosphate reductase holoenzyme provides the precursors necessary for viral DNA synthesis. Allows virus growth in non-dividing cells, as well as reactivation from latency in infected hosts. Catalyzes the biosynthesis of deoxyribonucleotides from the corresponding ribonucleotides. The polypeptide is Ribonucleoside-diphosphate reductase large subunit (Equine herpesvirus 2 (strain 86/87) (EHV-2)).